Consider the following 104-residue polypeptide: MQRLCVCVLILALALTAFSEASWKPRSQLQDAPSGPGANGGLEPHWLNRLGPASHHRWQLGLQGPPQQVADLSKKQGPWLEEEEAAYGWMDFGRRSAEDGDQHP.

The first 21 residues, 1–21 (MQRLCVCVLILALALTAFSEA), serve as a signal peptide directing secretion. The interval 22–49 (SWKPRSQLQDAPSGPGANGGLEPHWLNR) is disordered. The propeptide occupies 22–58 (SWKPRSQLQDAPSGPGANGGLEPHWLNRLGPASHHRW). Pyrrolidone carboxylic acid occurs at positions 59 and 76. At tyrosine 87 the chain carries Sulfotyrosine. Phenylalanine 92 bears the Phenylalanine amide mark. Phosphoserine is present on serine 96. The propeptide occupies 96-104 (SAEDGDQHP).

This sequence belongs to the gastrin/cholecystokinin family.

The protein resides in the secreted. Its function is as follows. Gastrin stimulates the stomach mucosa to produce and secrete hydrochloric acid and the pancreas to secrete its digestive enzymes. It also stimulates smooth muscle contraction and increases blood circulation and water secretion in the stomach and intestine. The sequence is that of Gastrin (GAST) from Felis catus (Cat).